The primary structure comprises 546 residues: Oncoprotein-induced transcript 3 protein (546 aa).

Positions 1 to 19 (MPLSLLLTCLSTTVTLVSP) are cleaved as a signal peptide. Asn89 and Asn116 each carry an N-linked (GlcNAc...) asparagine glycan. In terms of domain architecture, EGF-like; calcium-binding spans 182-222 (DENECEHNNGGCSEICVNLKNSHRCACGVGRVLRSDGKTCE). 3 disulfides stabilise this stretch: Cys186/Cys197, Cys193/Cys206, and Cys208/Cys221. A ZP domain is found at 261-516 (TCQVPVLCKS…SRCAQGCHRR (256 aa)). An N-linked (GlcNAc...) asparagine glycan is attached at Asn299.

As to expression, liver-specific. Expressed only in the hepatocytes.

It localises to the nucleus envelope. May be involved in hepatocellular function and development. This Mus musculus (Mouse) protein is Oncoprotein-induced transcript 3 protein (Oit3).